Reading from the N-terminus, the 50-residue chain is Temporin-SHb (50 aa).

The N-terminal stretch at 1–10 is a signal peptide; that stretch reads FLGTINLSLC. The propeptide occupies 11–35; sequence EQERDADEEERRDEPDESDVEVEKR. Positions 12 to 31 are disordered; that stretch reads QERDADEEERRDEPDESDVE. Acidic residues predominate over residues 14–30; that stretch reads RDADEEERRDEPDESDV. Position 48 is a leucine amide (Leu48).

This sequence belongs to the frog skin active peptide (FSAP) family. Temporin subfamily. Expressed by the skin glands.

Its subcellular location is the secreted. Functionally, amphipathic alpha-helical peptide with no antimicrobial activity. Does not display anti-leishmania activity. Does not show hemolytic activity (LC(50)&gt;116 uM). The protein is Temporin-SHb of Pelophylax saharicus (Sahara frog).